The primary structure comprises 227 residues: UPF0173 metal-dependent hydrolase BCB4264_A4722 (227 aa).

Belongs to the UPF0173 family.

The sequence is that of UPF0173 metal-dependent hydrolase BCB4264_A4722 from Bacillus cereus (strain B4264).